Consider the following 295-residue polypeptide: Tissue factor (295 aa).

The first 28 residues, 1 to 28 (MAIPMRPRLLAALAPTFLGFLLLQVAVG), serve as a signal peptide directing secretion. Residues 29–252 (AGTPPGKAFN…TEQWKSVLGE (224 aa)) lie on the Extracellular side of the membrane. N-linked (GlcNAc...) asparagine glycans are attached at residues Asn-38 and Asn-58. Residues Cys-76 and Cys-84 are joined by a disulfide bond. N-linked (GlcNAc...) asparagine glycosylation is found at Asn-95, Asn-109, Asn-170, and Asn-201. A disulfide bridge connects residues Cys-219 and Cys-242. The WKS motif motif lies at 246–248 (WKS). The helical transmembrane segment at 253 to 275 (TLIIVGAVVFLVTVFIILLTISL) threads the bilayer. Cys-276 carries S-palmitoyl cysteine lipidation. Over 276–295 (CKRRKNRAGQKRKNTPSRLA) the chain is Cytoplasmic.

The protein belongs to the tissue factor family. In terms of assembly, interacts with HSPE; the interaction, inhibited by heparin, promotes the generation of activated factor X and activates coagulation in the presence of activated factor VII.

The protein resides in the membrane. Its function is as follows. Initiates blood coagulation by forming a complex with circulating factor VII or VIIa. The [TF:VIIa] complex activates factors IX or X by specific limited proteolysis. TF plays a role in normal hemostasis by initiating the cell-surface assembly and propagation of the coagulation protease cascade. This is Tissue factor (F3) from Rattus norvegicus (Rat).